We begin with the raw amino-acid sequence, 591 residues long: Tricyclene synthase, chloroplastic (591 aa).

The transit peptide at 1–45 (MATLLQIGSGVIYSNALRKTLRRPQSSTCIIVTETTPCNKSPTVQ) directs the protein to the chloroplast. (2E)-geranyl diphosphate-binding residues include R302, D339, D343, R481, and N484. Positions 339 and 343 each coordinate Mg(2+). The DDXXD motif signature appears at 339-343 (DDIYD). Residues N484, T488, and E492 each contribute to the Mg(2+) site.

This sequence belongs to the terpene synthase family. Tpsb subfamily. Mg(2+) is required as a cofactor. Requires Mn(2+) as cofactor. Predominantly expressed in flowers but also in leaves, siliques and in stems.

It localises to the plastid. It is found in the chloroplast stroma. The enzyme catalyses (2E)-geranyl diphosphate = beta-myrcene + diphosphate. It carries out the reaction (2E)-geranyl diphosphate = tricyclene + diphosphate. The catalysed reaction is (2E)-geranyl diphosphate = (E)-beta-ocimene + diphosphate. It participates in secondary metabolite biosynthesis; terpenoid biosynthesis. Involved in monoterpene (C10) biosynthesis. The major product is beta-myrcene (56%) followed by (E)-beta-ocimene (20%) and minor amounts (less than 5%) of the cyclic monoterpene (-)-limonene, (+)-limonene, 2-carene and tricyclene. This is Tricyclene synthase, chloroplastic from Arabidopsis thaliana (Mouse-ear cress).